We begin with the raw amino-acid sequence, 232 residues long: Orotate phosphoribosyltransferase (232 aa).

Residues Arg107, Lys108, Lys111, and 133 to 141 (EDLTTDGGS) each bind 5-phospho-alpha-D-ribose 1-diphosphate. Residue Thr137 participates in orotate binding.

It belongs to the purine/pyrimidine phosphoribosyltransferase family. PyrE subfamily. Homodimer. Requires Mg(2+) as cofactor.

The catalysed reaction is orotidine 5'-phosphate + diphosphate = orotate + 5-phospho-alpha-D-ribose 1-diphosphate. Its pathway is pyrimidine metabolism; UMP biosynthesis via de novo pathway; UMP from orotate: step 1/2. Functionally, catalyzes the transfer of a ribosyl phosphate group from 5-phosphoribose 1-diphosphate to orotate, leading to the formation of orotidine monophosphate (OMP). The chain is Orotate phosphoribosyltransferase from Cereibacter sphaeroides (strain ATCC 17023 / DSM 158 / JCM 6121 / CCUG 31486 / LMG 2827 / NBRC 12203 / NCIMB 8253 / ATH 2.4.1.) (Rhodobacter sphaeroides).